The following is a 178-amino-acid chain: Sec-independent protein translocase protein TatB (178 aa).

A helical membrane pass occupies residues 1 to 21; it reads MFDIGWSELLVIGVVALIAIG. The interval 146–178 is disordered; it reads LAIVREIKPEPQPQPADGAAPAEPERLKDAKAS. Positions 168-178 are enriched in basic and acidic residues; sequence EPERLKDAKAS.

It belongs to the TatB family. The Tat system comprises two distinct complexes: a TatABC complex, containing multiple copies of TatA, TatB and TatC subunits, and a separate TatA complex, containing only TatA subunits. Substrates initially bind to the TatABC complex, which probably triggers association of the separate TatA complex to form the active translocon.

The protein resides in the cell inner membrane. In terms of biological role, part of the twin-arginine translocation (Tat) system that transports large folded proteins containing a characteristic twin-arginine motif in their signal peptide across membranes. Together with TatC, TatB is part of a receptor directly interacting with Tat signal peptides. TatB may form an oligomeric binding site that transiently accommodates folded Tat precursor proteins before their translocation. In Bradyrhizobium sp. (strain ORS 278), this protein is Sec-independent protein translocase protein TatB.